Reading from the N-terminus, the 273-residue chain is MTKLIIHLVSDSSVQTAKYAANSALAQFTSVKPKLYHWPMIRNLELLNEVLSKIESKHGIVLYTIADQELRKALTKFCYELKIPCISVIGKIIKEMSVFSCIEIEKEQNYNYKFDKTYFDTLNAIDYAIRHDDGQMLNELSEADIILIGPSRTSKTPTSVFLAYNGLKAANIPYVYNCPSPDFIEKDIDQLVVGLVINPNRLIEIREARLNLLQINDNKSYTDFNIVQKECLEVRKICDQKNWPVIDVSTRSIEETAALIMRIYYNRKNKYNK.

149-156 serves as a coordination point for ADP; the sequence is GPSRTSKT.

The protein belongs to the pyruvate, phosphate/water dikinase regulatory protein family. PDRP subfamily.

It carries out the reaction N(tele)-phospho-L-histidyl/L-threonyl-[pyruvate, phosphate dikinase] + ADP = N(tele)-phospho-L-histidyl/O-phospho-L-threonyl-[pyruvate, phosphate dikinase] + AMP + H(+). It catalyses the reaction N(tele)-phospho-L-histidyl/O-phospho-L-threonyl-[pyruvate, phosphate dikinase] + phosphate + H(+) = N(tele)-phospho-L-histidyl/L-threonyl-[pyruvate, phosphate dikinase] + diphosphate. In terms of biological role, bifunctional serine/threonine kinase and phosphorylase involved in the regulation of the pyruvate, phosphate dikinase (PPDK) by catalyzing its phosphorylation/dephosphorylation. The chain is Putative pyruvate, phosphate dikinase regulatory protein from Rickettsia akari (strain Hartford).